We begin with the raw amino-acid sequence, 127 residues long: Small ribosomal subunit protein uS12 (127 aa).

At Asp-89 the chain carries 3-methylthioaspartic acid. The interval 102–127 is disordered; sequence LDTAGVKDRKQGRSKYGTKRPKEAKK. The span at 113–127 shows a compositional bias: basic residues; that stretch reads GRSKYGTKRPKEAKK.

The protein belongs to the universal ribosomal protein uS12 family. In terms of assembly, part of the 30S ribosomal subunit. Contacts proteins S8 and S17. May interact with IF1 in the 30S initiation complex.

In terms of biological role, with S4 and S5 plays an important role in translational accuracy. Functionally, interacts with and stabilizes bases of the 16S rRNA that are involved in tRNA selection in the A site and with the mRNA backbone. Located at the interface of the 30S and 50S subunits, it traverses the body of the 30S subunit contacting proteins on the other side and probably holding the rRNA structure together. The combined cluster of proteins S8, S12 and S17 appears to hold together the shoulder and platform of the 30S subunit. The chain is Small ribosomal subunit protein uS12 from Nostoc punctiforme (strain ATCC 29133 / PCC 73102).